The sequence spans 139 residues: uncharacterized protein (139 aa).

This sequence to S.typhimurium FliF.

Its function is as follows. May be involved in the assembly, structure, or function of the flagellum. May polymerize to form a filamentous structure that is part of the flagellum. This is an uncharacterized protein from Bacillus subtilis (strain 168).